Here is a 346-residue protein sequence, read N- to C-terminus: MTLEQYGFTNFFKEQKIAATSSYGRVTAVFRDYYRVITENEEFLASLKRGNFYELSSTSLPAVGDFVEVSSDAQILSVLERKTVFSRMNKDSEEQLIAANFDYALIVMSLNHDFNLNRLERYLTVAWDSGATPIIILTKADLVEDLTAFAQQLETVAYGVPAYYVDNLSHHGFEALERDLKPNSTLVLLGSSGVGKSSFINSLAGTDLMKTAGIREDDSKGKHTTTHREMHLLTNGWIVIDTPGMREFGVGFNQAGLETTFSDVEELAEGCRFHDCSHTQEPGCAVKAALEDGTLTMQHYENWLKLQREMAYHARKNSPALARQERDRWKVIQKSLRTHLKTRPKK.

The CP-type G domain occupies 93-248 (EEQLIAANFD…VIDTPGMREF (156 aa)). GTP-binding positions include 138 to 141 (TKAD) and 190 to 198 (GSSGVGKSS). Residues Cys-271, Cys-276, His-278, and Cys-284 each contribute to the Zn(2+) site.

Belongs to the TRAFAC class YlqF/YawG GTPase family. RsgA subfamily. As to quaternary structure, monomer. Associates with 30S ribosomal subunit, binds 16S rRNA. Zn(2+) is required as a cofactor.

It localises to the cytoplasm. One of several proteins that assist in the late maturation steps of the functional core of the 30S ribosomal subunit. Helps release RbfA from mature subunits. May play a role in the assembly of ribosomal proteins into the subunit. Circularly permuted GTPase that catalyzes slow GTP hydrolysis, GTPase activity is stimulated by the 30S ribosomal subunit. The chain is Small ribosomal subunit biogenesis GTPase RsgA 2 from Listeria monocytogenes serotype 4b (strain F2365).